The following is a 59-amino-acid chain: Large ribosomal subunit protein uL30 (59 aa).

This sequence belongs to the universal ribosomal protein uL30 family. As to quaternary structure, part of the 50S ribosomal subunit.

This is Large ribosomal subunit protein uL30 from Erwinia tasmaniensis (strain DSM 17950 / CFBP 7177 / CIP 109463 / NCPPB 4357 / Et1/99).